We begin with the raw amino-acid sequence, 123 residues long: Protein Wnt-3a (123 aa).

Ser-1 is lipidated: O-palmitoleoyl serine. Cys-89 and Cys-104 form a disulfide bridge. N-linked (GlcNAc...) asparagine glycosylation occurs at Asn-90.

The protein belongs to the Wnt family. In terms of processing, disulfide bonds have critical and distinct roles in secretion and activity. Loss of each conserved cysteine results in high molecular weight oxidized Wnt oligomers, which are formed through inter-Wnt disulfide bonding. Post-translationally, palmitoleoylation is required for efficient binding to frizzled receptors. Depalmitoleoylation leads to Wnt signaling pathway inhibition.

It is found in the secreted. The protein resides in the extracellular space. Its subcellular location is the extracellular matrix. Functionally, ligand for members of the frizzled family of seven transmembrane receptors. Functions in the canonical Wnt signaling pathway that results in activation of transcription factors of the TCF/LEF family. Required for normal embryonic mesoderm development and formation of caudal somites. Required for normal morphogenesis of the developing neural tube. This Pituophis melanoleucus (Pine snake) protein is Protein Wnt-3a (WNT-3A).